The following is a 327-amino-acid chain: MKKIIKVEAVEKHFGNQVIIPPLSLDIKEGEFLTILGPSGCGKTTLLRMIAGFETPTKGNLLLDDEKINDLPPYKRHMNLVFQHYALFPHMNVEKNICFGMKMQKVPAAEQKERAEEAMRLTQLLEFRNRKPAKLSGGQQQRVAIARAIVNNPRVLLLDEPLGALDFKLRKDLQRELKNLQRNLGITFIYVTHDQEEAMSMSDRIVVMNKGHIEQIGTPKEIYNKPKTLFVATFIGENNIVKNGEGYVAIRPENVKVRSVEERILKEYHLGHIEDIEFVGNMEKLYVRDEKTSELLMAYQTAEEAAQWSIGDNVYVGWEQEDEVTLN.

In terms of domain architecture, ABC transporter spans isoleucine 5–isoleucine 235. Glycine 37–threonine 44 lines the ATP pocket.

Belongs to the ABC transporter superfamily. Spermidine/putrescine importer (TC 3.A.1.11.1) family. The complex is composed of two ATP-binding proteins (PotA), two transmembrane proteins (PotB and PotC) and a solute-binding protein (PotD).

It is found in the cell membrane. The enzyme catalyses ATP + H2O + polyamine-[polyamine-binding protein]Side 1 = ADP + phosphate + polyamineSide 2 + [polyamine-binding protein]Side 1.. Part of the ABC transporter complex PotABCD involved in spermidine/putrescine import. Responsible for energy coupling to the transport system. This chain is Spermidine/putrescine import ATP-binding protein PotA, found in Bacillus thuringiensis subsp. konkukian (strain 97-27).